The sequence spans 511 residues: Apolipoprotein N-acyltransferase (511 aa).

6 consecutive transmembrane segments (helical) span residues 24 to 44, 58 to 78, 90 to 110, 125 to 145, 163 to 183, and 192 to 212; these read LALA…LLYL, GWWY…VSIH, FLML…AWLW, LAFA…LTGF, VPVG…ALLV, and GASL…GLYL. In terms of domain architecture, CN hydrolase spans 230–470; it reads IQGNIAQELK…QGILRGEVIP (241 aa). The active-site Proton acceptor is Glu-269. Residue Lys-330 is part of the active site. The Nucleophile role is filled by Cys-382. A helical membrane pass occupies residues 482–502; sequence VWPLAGLAGVLLLWALLGRQL.

Belongs to the CN hydrolase family. Apolipoprotein N-acyltransferase subfamily.

The protein resides in the cell inner membrane. The catalysed reaction is N-terminal S-1,2-diacyl-sn-glyceryl-L-cysteinyl-[lipoprotein] + a glycerophospholipid = N-acyl-S-1,2-diacyl-sn-glyceryl-L-cysteinyl-[lipoprotein] + a 2-acyl-sn-glycero-3-phospholipid + H(+). It participates in protein modification; lipoprotein biosynthesis (N-acyl transfer). Catalyzes the phospholipid dependent N-acylation of the N-terminal cysteine of apolipoprotein, the last step in lipoprotein maturation. The protein is Apolipoprotein N-acyltransferase of Pseudomonas aeruginosa (strain UCBPP-PA14).